A 234-amino-acid polypeptide reads, in one-letter code: Demethylmenaquinone methyltransferase (234 aa).

Residues T62, D80, 100–101 (DA), and S117 each bind S-adenosyl-L-methionine.

Belongs to the class I-like SAM-binding methyltransferase superfamily. MenG/UbiE family.

It carries out the reaction a 2-demethylmenaquinol + S-adenosyl-L-methionine = a menaquinol + S-adenosyl-L-homocysteine + H(+). It functions in the pathway quinol/quinone metabolism; menaquinone biosynthesis; menaquinol from 1,4-dihydroxy-2-naphthoate: step 2/2. In terms of biological role, methyltransferase required for the conversion of demethylmenaquinol (DMKH2) to menaquinol (MKH2). This chain is Demethylmenaquinone methyltransferase, found in Mycobacterium bovis (strain ATCC BAA-935 / AF2122/97).